We begin with the raw amino-acid sequence, 740 residues long: ATP-dependent zinc metalloprotease YME1L (740 aa).

At methionine 1–lysine 256 the chain is on the mitochondrial matrix side. The helical transmembrane segment at threonine 257 to threonine 277 threads the bilayer. Topologically, residues serine 278–threonine 740 are mitochondrial intermembrane. Glycine 347–threonine 351 lines the ATP pocket. Histidine 563 contributes to the Zn(2+) binding site. Glutamate 564 is a catalytic residue. Positions 567 and 641 each coordinate Zn(2+).

The protein in the N-terminal section; belongs to the AAA ATPase family. In the C-terminal section; belongs to the peptidase M41 family. Requires Zn(2+) as cofactor.

The protein resides in the mitochondrion inner membrane. In terms of biological role, ATP-dependent metalloprotease that catalyzes the degradation of folded and unfolded proteins with a suitable degron sequence in the mitochondrial intermembrane region. Plays an important role in regulating mitochondrial morphology and function by cleaving Opa1, giving rise to a form of Opa1 that promotes maintenance of normal mitochondrial structure and mitochondrial protein metabolism. Ensures cell proliferation, maintains normal cristae morphology and complex I respiration activity, promotes antiapoptotic activity and protects mitochondria from the accumulation of oxidatively damaged membrane proteins. Required to control the accumulation of nonassembled respiratory chain subunits such as ND-30. This is ATP-dependent zinc metalloprotease YME1L from Drosophila melanogaster (Fruit fly).